Reading from the N-terminus, the 483-residue chain is Homoserine O-acetyltransferase (483 aa).

The AB hydrolase-1 domain maps to 47 to 346 (NVILICHALT…HFGHDAFLLE (300 aa)). The active-site Nucleophile is serine 152. Residue arginine 221 participates in substrate binding. Catalysis depends on residues aspartate 307 and histidine 340. Aspartate 341 is a binding site for substrate. 2 consecutive CBS domains span residues 367 to 423 (MSED…KISS) and 428 to 483 (LSRD…KGTK).

Belongs to the AB hydrolase superfamily. MetX family. Homodimer.

It is found in the cytoplasm. The enzyme catalyses L-homoserine + acetyl-CoA = O-acetyl-L-homoserine + CoA. The protein operates within amino-acid biosynthesis; L-methionine biosynthesis via de novo pathway; O-acetyl-L-homoserine from L-homoserine: step 1/1. Transfers an acetyl group from acetyl-CoA to L-homoserine, forming acetyl-L-homoserine. This chain is Homoserine O-acetyltransferase, found in Methanohalophilus mahii (strain ATCC 35705 / DSM 5219 / SLP).